Here is a 417-residue protein sequence, read N- to C-terminus: S-adenosylmethionine synthase (417 aa).

Residue His-16 coordinates ATP. Asp-18 serves as a coordination point for Mg(2+). Residue Glu-44 coordinates K(+). Residues Glu-57 and Gln-100 each coordinate L-methionine. The interval 100–110 is flexible loop; it reads QSPDIAQGVTS. Residues 175-177, 251-252, Asp-260, 266-267, Ala-283, and Lys-287 each bind ATP; these read DGK, KF, and RK. Asp-260 is a binding site for L-methionine. Residue Lys-291 participates in L-methionine binding.

This sequence belongs to the AdoMet synthase family. Homotetramer; dimer of dimers. Mg(2+) is required as a cofactor. The cofactor is K(+).

It is found in the cytoplasm. The catalysed reaction is L-methionine + ATP + H2O = S-adenosyl-L-methionine + phosphate + diphosphate. It participates in amino-acid biosynthesis; S-adenosyl-L-methionine biosynthesis; S-adenosyl-L-methionine from L-methionine: step 1/1. Functionally, catalyzes the formation of S-adenosylmethionine (AdoMet) from methionine and ATP. The overall synthetic reaction is composed of two sequential steps, AdoMet formation and the subsequent tripolyphosphate hydrolysis which occurs prior to release of AdoMet from the enzyme. The protein is S-adenosylmethionine synthase of Picosynechococcus sp. (strain ATCC 27264 / PCC 7002 / PR-6) (Agmenellum quadruplicatum).